Reading from the N-terminus, the 804-residue chain is Phenylalanine--tRNA ligase beta subunit (804 aa).

The 116-residue stretch at glycine 40–leucine 155 folds into the tRNA-binding domain. The B5 domain occupies isoleucine 409–serine 484. Residues aspartate 462, aspartate 468, glutamate 471, and glutamate 472 each contribute to the Mg(2+) site. Residues proline 710–arginine 803 enclose the FDX-ACB domain.

It belongs to the phenylalanyl-tRNA synthetase beta subunit family. Type 1 subfamily. In terms of assembly, tetramer of two alpha and two beta subunits. Mg(2+) is required as a cofactor.

The protein resides in the cytoplasm. It catalyses the reaction tRNA(Phe) + L-phenylalanine + ATP = L-phenylalanyl-tRNA(Phe) + AMP + diphosphate + H(+). This is Phenylalanine--tRNA ligase beta subunit from Bacillus licheniformis (strain ATCC 14580 / DSM 13 / JCM 2505 / CCUG 7422 / NBRC 12200 / NCIMB 9375 / NCTC 10341 / NRRL NRS-1264 / Gibson 46).